Consider the following 466-residue polypeptide: Glutamate--tRNA ligase 1 (466 aa).

A 'HIGH' region motif is present at residues 9–19; it reads PSPTGMLHIGG. Residues 238-242 carry the 'KMSKS' region motif; the sequence is KLSKR. K241 serves as a coordination point for ATP.

This sequence belongs to the class-I aminoacyl-tRNA synthetase family. Glutamate--tRNA ligase type 1 subfamily. In terms of assembly, monomer.

It localises to the cytoplasm. It catalyses the reaction tRNA(Glu) + L-glutamate + ATP = L-glutamyl-tRNA(Glu) + AMP + diphosphate. Catalyzes the attachment of glutamate to tRNA(Glu) in a two-step reaction: glutamate is first activated by ATP to form Glu-AMP and then transferred to the acceptor end of tRNA(Glu). The sequence is that of Glutamate--tRNA ligase 1 from Acidiphilium cryptum (strain JF-5).